The chain runs to 242 residues: NADH-quinone oxidoreductase subunit C (242 aa).

The interval 67–101 (VVNSVGLGHKEQGAKPITNRRTTSDNVGESKSIDY) is insert.

Belongs to the complex I 30 kDa subunit family. In terms of assembly, NDH-1 is composed of 14 different subunits. Subunits NuoB, C, D, E, F, and G constitute the peripheral sector of the complex.

Its subcellular location is the cell inner membrane. The catalysed reaction is a quinone + NADH + 5 H(+)(in) = a quinol + NAD(+) + 4 H(+)(out). In terms of biological role, NDH-1 shuttles electrons from NADH, via FMN and iron-sulfur (Fe-S) centers, to quinones in the respiratory chain. The immediate electron acceptor for the enzyme in this species is believed to be ubiquinone. Couples the redox reaction to proton translocation (for every two electrons transferred, four hydrogen ions are translocated across the cytoplasmic membrane), and thus conserves the redox energy in a proton gradient. This Rickettsia conorii (strain ATCC VR-613 / Malish 7) protein is NADH-quinone oxidoreductase subunit C.